The chain runs to 289 residues: ATP synthase gamma chain (289 aa).

Belongs to the ATPase gamma chain family. F-type ATPases have 2 components, CF(1) - the catalytic core - and CF(0) - the membrane proton channel. CF(1) has five subunits: alpha(3), beta(3), gamma(1), delta(1), epsilon(1). CF(0) has three main subunits: a, b and c.

It localises to the cell inner membrane. Produces ATP from ADP in the presence of a proton gradient across the membrane. The gamma chain is believed to be important in regulating ATPase activity and the flow of protons through the CF(0) complex. In Leptospira biflexa serovar Patoc (strain Patoc 1 / ATCC 23582 / Paris), this protein is ATP synthase gamma chain.